A 198-amino-acid chain; its full sequence is Nucleoid occlusion factor SlmA (198 aa).

Residues 10–70 (NRREEILQSL…SLIEFIEDSL (61 aa)) form the HTH tetR-type domain. Residues 33–52 (TTAKLAASVGVSEAALYRHF) constitute a DNA-binding region (H-T-H motif). Positions 119–144 (DRLQGRINQLFERIEVQLRQVMREKK) form a coiled coil.

It belongs to the nucleoid occlusion factor SlmA family. Homodimer. Interacts with FtsZ.

It localises to the cytoplasm. The protein localises to the nucleoid. Its function is as follows. Required for nucleoid occlusion (NO) phenomenon, which prevents Z-ring formation and cell division over the nucleoid. Acts as a DNA-associated cell division inhibitor that binds simultaneously chromosomal DNA and FtsZ, and disrupts the assembly of FtsZ polymers. SlmA-DNA-binding sequences (SBS) are dispersed on non-Ter regions of the chromosome, preventing FtsZ polymerization at these regions. This is Nucleoid occlusion factor SlmA from Klebsiella pneumoniae (strain 342).